A 555-amino-acid chain; its full sequence is MAQFVYTMHRVGKVVPPKRHILKNISLSFFPGAKIGVLGLNGAGKSTLLRIMAGIDKDIEGEARPQPDIKIGYLPQEPQLNPEHTVRESIEEAVSEVVNALKRLDEVYALYADPDADFDKLAAEQGRLEEIIQAHDGHNLNVQLERAADALRLPDWDAKIANLSGGERRRVALCRLLLEKPDMLLLDEPTNHLDAESVAWLERFLHDFEGTVVAITHDRYFLDNVAGWILELDRGEGIPWEGNYSSWLEQKDQRLAQEASQEAARRKSIEKELEWVRQGTKGRQSKGKARLARFEELNSTEYQKRNETNELFIPPGPRLGDKVLEVSNLRKSYGDRLLIDDLSFSIPKGAIVGIIGPNGAGKSTLFRMISGQEQPDSGTITLGETVKLASVDQFRDSMDNSKTVWEEVSGGLDIMKIGNTEMPSRAYVGRFNFKGVDQGKRVGELSGGERGRLHLAKLLQVGGNMLLLDEPTNDLDIETLRALENALLEFPGCAMVISHDRWFLDRIATHILDYQDEGKVEFFEGNFTEYEEYKKRTLGADALEPKRIKYKRIAK.

2 ABC transporter domains span residues Tyr6–Ala259 and Leu324–Tyr550. Residue Gly39–Ser46 participates in ATP binding. The segment at Ser95–Asn139 is arm. A ptIM region spans residues Gly242–Lys322. Residue Gly356 to Ser363 coordinates ATP.

Belongs to the ABC transporter superfamily. ABCF family. Translational throttle EttA subfamily. In terms of assembly, monomer. Probably contacts ribosomal proteins L1, L5, L33 and S7, the 16S and 23S rRNA and the P-site containing tRNA(fMet).

The protein resides in the cytoplasm. The catalysed reaction is ATP + H2O = ADP + phosphate + H(+). A translation factor that gates the progression of the 70S ribosomal initiation complex (IC, containing tRNA(fMet) in the P-site) into the translation elongation cycle by using a mechanism sensitive to the ATP/ADP ratio. Binds to the 70S ribosome E-site where it modulates the state of the translating ribosome during subunit translocation. ATP hydrolysis probably frees it from the ribosome, which can enter the elongation phase. The chain is Energy-dependent translational throttle protein EttA from Escherichia coli O157:H7.